The primary structure comprises 315 residues: Ribosomal protein L11 methyltransferase (315 aa).

S-adenosyl-L-methionine contacts are provided by Thr164, Gly185, Asp207, and Asn249.

This sequence belongs to the methyltransferase superfamily. PrmA family.

Its subcellular location is the cytoplasm. It carries out the reaction L-lysyl-[protein] + 3 S-adenosyl-L-methionine = N(6),N(6),N(6)-trimethyl-L-lysyl-[protein] + 3 S-adenosyl-L-homocysteine + 3 H(+). Its function is as follows. Methylates ribosomal protein L11. The sequence is that of Ribosomal protein L11 methyltransferase from Lactobacillus gasseri (strain ATCC 33323 / DSM 20243 / BCRC 14619 / CIP 102991 / JCM 1131 / KCTC 3163 / NCIMB 11718 / NCTC 13722 / AM63).